A 352-amino-acid polypeptide reads, in one-letter code: B1 bradykinin receptor (352 aa).

The Extracellular portion of the chain corresponds to Met1–Thr41. 2 N-linked (GlcNAc...) asparagine glycosylation sites follow: Asn13 and Asn21. Residues Phe42–Leu62 form a helical membrane-spanning segment. Over Leu63–Glu72 the chain is Cytoplasmic. The chain crosses the membrane as a helical span at residues Ile73–Ala93. Residues Glu94–Arg110 are Extracellular-facing. Cys109 and Cys188 form a disulfide bridge. A helical transmembrane segment spans residues Gly111 to Ser131. The Cytoplasmic portion of the chain corresponds to Gln132–Ala153. The helical transmembrane segment at Arg154–Leu174 threads the bilayer. At Arg175–Asn206 the chain is on the extracellular side. N-linked (GlcNAc...) asparagine glycosylation occurs at Asn184. A helical membrane pass occupies residues Ile207–Ser227. The Cytoplasmic segment spans residues Leu228 to Leu250. Residues Ile251–Leu271 traverse the membrane as a helical segment. Topologically, residues Glu272–Gln294 are extracellular. The chain crosses the membrane as a helical span at residues Leu295 to Gly315. At Arg316–Asn352 the chain is on the cytoplasmic side. A lipid anchor (S-palmitoyl cysteine) is attached at Cys329.

Belongs to the G-protein coupled receptor 1 family. Bradykinin receptor subfamily. BDKRB1 sub-subfamily.

The protein resides in the cell membrane. This is a receptor for bradykinin. Could be a factor in chronic pain and inflammation. The protein is B1 bradykinin receptor (BDKRB1) of Chlorocebus aethiops (Green monkey).